Reading from the N-terminus, the 69-residue chain is Putative membrane protein insertion efficiency factor (69 aa).

This sequence belongs to the UPF0161 family.

The protein localises to the cell membrane. Functionally, could be involved in insertion of integral membrane proteins into the membrane. This is Putative membrane protein insertion efficiency factor from Clostridium botulinum (strain 657 / Type Ba4).